Consider the following 548-residue polypeptide: Membrane protein insertase YidC (548 aa).

A helical transmembrane segment spans residues N6–D26. Residues N28–S55 form a disordered region. Residues Q30–Q50 are compositionally biased toward low complexity. A run of 4 helical transmembrane segments spans residues F350–Y370, L420–L440, L458–I478, and P499–V519.

The protein belongs to the OXA1/ALB3/YidC family. Type 1 subfamily. As to quaternary structure, interacts with the Sec translocase complex via SecD. Specifically interacts with transmembrane segments of nascent integral membrane proteins during membrane integration.

The protein localises to the cell inner membrane. In terms of biological role, required for the insertion and/or proper folding and/or complex formation of integral membrane proteins into the membrane. Involved in integration of membrane proteins that insert both dependently and independently of the Sec translocase complex, as well as at least some lipoproteins. Aids folding of multispanning membrane proteins. This chain is Membrane protein insertase YidC, found in Shigella flexneri.